A 156-amino-acid polypeptide reads, in one-letter code: Large ribosomal subunit protein uL22 (156 aa).

Belongs to the universal ribosomal protein uL22 family. In terms of assembly, part of the 50S ribosomal subunit.

Its function is as follows. This protein binds specifically to 23S rRNA. It makes multiple contacts with different domains of the 23S rRNA in the assembled 50S subunit and ribosome. In terms of biological role, the globular domain of the protein is located near the polypeptide exit tunnel on the outside of the subunit, while an extended beta-hairpin is found that lines the wall of the exit tunnel in the center of the 70S ribosome. The polypeptide is Large ribosomal subunit protein uL22 (Sulfurisphaera tokodaii (strain DSM 16993 / JCM 10545 / NBRC 100140 / 7) (Sulfolobus tokodaii)).